Here is a 114-residue protein sequence, read N- to C-terminus: Gene 37 protein (114 aa).

The polypeptide is Gene 37 protein (37) (Mycobacterium (Mycobacteriophage L5)).